The chain runs to 206 residues: Recombination protein RecR (206 aa).

Residues 58 to 73 (CNICGYITEKNICNFC) form a C4-type zinc finger. The Toprim domain maps to 81-178 (STIMIVADNR…KITKLAYGIP (98 aa)).

This sequence belongs to the RecR family.

Functionally, may play a role in DNA repair. It seems to be involved in an RecBC-independent recombinational process of DNA repair. It may act with RecF and RecO. This Phytoplasma mali (strain AT) protein is Recombination protein RecR.